Consider the following 1094-residue polypeptide: Probable arabinosyltransferase C (1094 aa).

A run of 13 helical transmembrane segments spans residues 28-50, 232-251, 264-286, 341-360, 373-392, 431-453, 466-488, 530-552, 565-582, 586-608, 620-642, 657-679, and 700-722; these read IARY…TPLL, AAMI…LHIL, PARW…WWHF, SIWM…WVIS, TSRA…WLPL, IGAL…LVAI, RFGV…IPIF, SIAR…AMSL, SRRI…MMFT, WTHH…AVAV, TVFA…GWWY, WRWS…AAWF, and LAGI…EVVS. Residues 817–831 are compositionally biased toward low complexity; it reads GSEPGTEGGTTAAPG. The segment at 817–836 is disordered; it reads GSEPGTEGGTTAAPGINGSR.

Belongs to the emb family.

It localises to the cell membrane. In terms of biological role, arabinosyl transferase responsible for the polymerization of arabinose into the arabinan of arabinogalactan. In Mycobacterium tuberculosis (strain CDC 1551 / Oshkosh), this protein is Probable arabinosyltransferase C (embC).